Reading from the N-terminus, the 246-residue chain is MNNNTTAPTYTLRGLQLIGWRDMQHALDYLFADGQLKQGTLVAINAEKMLTIEDNAEVRELINAAEFKYADGISVVRSVRKKYPQAQVSRVAGADLWEELMARAGKEGTPVFLVGGKPEVLAQTEAKLRNQWNVNIVGSQDGYFKPEQRQALFERIHASGAQIVTVAMGSPKQEIFMRDCRLVHPDALYMGVGGTYDVFTGHVKRAPKIWQTLGLEWLYRLLSQPSRIKRQLRLLRYLRWHYTGNL.

It belongs to the glycosyltransferase 26 family.

It carries out the reaction UDP-N-acetyl-alpha-D-mannosaminouronate + N-acetyl-alpha-D-glucosaminyl-di-trans,octa-cis-undecaprenyl diphosphate = beta-D-ManNAcA-(1-&gt;4)-alpha-D-GlcNAc-di-trans,octa-cis-undecaprenyl diphosphate + UDP + H(+). It functions in the pathway bacterial outer membrane biogenesis; enterobacterial common antigen biosynthesis. In terms of biological role, catalyzes the synthesis of Und-PP-GlcNAc-ManNAcA (Lipid II), the second lipid-linked intermediate involved in enterobacterial common antigen (ECA) synthesis. This is UDP-N-acetyl-D-mannosaminuronic acid transferase from Escherichia coli O6:K15:H31 (strain 536 / UPEC).